Here is a 243-residue protein sequence, read N- to C-terminus: Clathrin light chain A (243 aa).

Met-1 is subject to Blocked amino end (Met). Disordered stretches follow at residues 1–22 (MAEL…GVAG) and 49–87 (ILDG…GPTD). Residues 10-20 (PAGGPALGNGV) show a composition bias toward gly residues. The segment at 95 to 157 (VDRLQSEPES…QLQKTKANNR (63 aa)) is involved in binding clathrin heavy chain. Residues Ser-100 and Ser-201 each carry the phosphoserine modification. Lys-218 is subject to N6-acetyllysine. A Phosphoserine modification is found at Ser-231. Lys-237 carries the N6-acetyllysine modification.

It belongs to the clathrin light chain family. Clathrin coats are formed from molecules containing 3 heavy chains and 3 light chains. Interacts with CALY; the interaction stimulates clathrin self-assembly and clathrin-mediated endocytosis. Interacts with CKAP5 and TACC3 forming the TACC3/ch-TOG/clathrin complex located at spindle inter-microtubules bridges; the complex implicates clathrin triskelions.

It localises to the cytoplasmic vesicle membrane. The protein resides in the membrane. It is found in the coated pit. Its subcellular location is the cytoplasm. The protein localises to the cytoskeleton. It localises to the spindle. Clathrin is the major protein of the polyhedral coat of coated pits and vesicles. Acts as a component of the TACC3/ch-TOG/clathrin complex proposed to contribute to stabilization of kinetochore fibers of the mitotic spindle by acting as inter-microtubule bridge. This Bos taurus (Bovine) protein is Clathrin light chain A (CLTA).